Reading from the N-terminus, the 577-residue chain is Vacuolar protein sorting-associated protein 45 (577 aa).

The protein belongs to the STXBP/unc-18/SEC1 family. As to quaternary structure, interacts with PEP7 and TLG2.

The protein localises to the cytoplasm. Its subcellular location is the vacuole membrane. Its function is as follows. Essential for vacuolar protein sorting. Function in membrane traffic between the Golgi and the vacuole. This chain is Vacuolar protein sorting-associated protein 45 (VPS45), found in Saccharomyces cerevisiae (strain ATCC 204508 / S288c) (Baker's yeast).